Here is a 661-residue protein sequence, read N- to C-terminus: Bifunctional xylanase/xylan deacetylase (661 aa).

Positions 1-27 (MKLPTLGKCVVRTLMGAVALGAISVNA) are cleaved as a signal peptide. Residues 29 to 226 (TLSSNSTGTN…SRGSSDITVS (198 aa)) enclose the GH11 domain. The active-site Nucleophile; for endoxylanase activity is the Glu116. The active-site Proton donor; for endoxylanase activity is the Glu213. The segment at 220 to 259 (SSDITVSEGTSGGGTSSVGGASSSVNSSTGGGSSGGITVR) is disordered. Residues 237–247 (VGGASSSVNSS) are compositionally biased toward low complexity. The interval 394–577 (SNCSGYVGIT…AKGLCPGRID (184 aa)) is polysaccharide deacetylase. One can recognise a NodB homology domain in the interval 398–574 (GYVGITFDDG…NLRAKGLCPG (177 aa)). Positions 578–610 (PNTGRAVAPSSSGGSSSVALSSSSRSSSSAGGN) are disordered. Over residues 581 to 608 (GRAVAPSSSGGSSSVALSSSSRSSSSAG) the composition is skewed to low complexity. The CBM10 domain occupies 616-645 (QCNWWGTFYPLCQTQTSGWGWENSRSCIST).

In the N-terminal section; belongs to the glycosyl hydrolase 11 (cellulase G) family.

It is found in the secreted. The enzyme catalyses Endohydrolysis of (1-&gt;4)-beta-D-xylosidic linkages in xylans.. It carries out the reaction Deacetylation of xylans and xylo-oligosaccharides.. It participates in glycan degradation; xylan degradation. Functionally, endo-acting xylanase which specifically cleaves internal linkages on the xylan backbone, releasing xylooligosaccharides. Is able to hydrolyze oat spelt xylan and the arabinoxylans from wheat and rye, releasing xylobiose as the major product. Also likely catalyzes, via its C-terminal domain, the removal of acetyl groups from acetylated xylan. Thus, has the capability of hydrolyzing acetylated xylan. Does not attack mannan, galactan, arabinan or any cellulosic substrates. The protein is Bifunctional xylanase/xylan deacetylase (xyn11A) of Cellvibrio japonicus (Pseudomonas fluorescens subsp. cellulosa).